A 640-amino-acid chain; its full sequence is MPVITLPDGSQRSFDHAVSVAEVAASIGAGLAKATVAGKVDGKLVDACDLISNDATLQIITPKDEEGLEIIRHSCAHLVGHAVKQLYPTAKMVIGPVIDEGFYYDIAYERPFTPEDMAAIEKRMMELIEKDYDVVKKMTPRAEVIDVFKARGEDYKLRLVEDMPDEQAMGLYYHEEYVDMCRGPHVPNTRFLKAFKLTKLSGAYWRGDAKNEQLQRVYGTAWADKKQLAAYIQRIEEAEKRDHRKIGKQLDLFHLQEEAPGMVFWHANGWTVYQVLEQYMRGVQRENGYQEIKTPQVVDRILWERSGHWSNYAENMFTTSSESRDYAVKPMNCPCHVQVFNQGLKSYRDLPLRLAEFGACHRNEPSGALHGIMRVRGFVQDDAHIFCTEDQVKKEAADFIKLTLDVYKDFGFSDIAMKLSTRPAKRVGSEELWDRAETALADALNESGLEWEYQPGEGAFYGPKIEFTLRDCLGRNWQCGTLQYDPNLPERLDASYIAEDNSRVRPVMLHRAILGSFERFIGMLIEHYAGVFPAWLAPTQAVIMNITDKQADFALEVEKSLNGSGFRAKSDLRNEKIGFKIREHTLLKVPYLLVIGDREVETQTVAVRTREGADLGSMPVAQFVELLTQAVSRRGRQESE.

The TGS domain maps to 1–61 (MPVITLPDGS…SNDATLQIIT (61 aa)). The segment at 242 to 533 (DHRKIGKQLD…LIEHYAGVFP (292 aa)) is catalytic. Positions 333, 384, and 510 each coordinate Zn(2+).

Belongs to the class-II aminoacyl-tRNA synthetase family. As to quaternary structure, homodimer. Requires Zn(2+) as cofactor.

Its subcellular location is the cytoplasm. It carries out the reaction tRNA(Thr) + L-threonine + ATP = L-threonyl-tRNA(Thr) + AMP + diphosphate + H(+). Functionally, catalyzes the attachment of threonine to tRNA(Thr) in a two-step reaction: L-threonine is first activated by ATP to form Thr-AMP and then transferred to the acceptor end of tRNA(Thr). Also edits incorrectly charged L-seryl-tRNA(Thr). The sequence is that of Threonine--tRNA ligase from Pseudomonas putida (strain ATCC 47054 / DSM 6125 / CFBP 8728 / NCIMB 11950 / KT2440).